A 77-amino-acid polypeptide reads, in one-letter code: uncharacterized protein (77 aa).

Putative sugar-binding regulatory protein for the alpha-amylase gene. This is an uncharacterized protein from Streptomyces violaceus (Streptomyces venezuelae).